A 250-amino-acid polypeptide reads, in one-letter code: Functional amyloid sbunit FapE (250 aa).

A signal peptide spans Met1 to Ala27.

This sequence belongs to the FapE family. A minor component of purified amyloid fibrils. Fibrils are resistant to boiling in 2% (weight/vol) SDS and require &gt;90% (vol/vol) formic acid to dissolve.

The protein resides in the fimbrium. Its subcellular location is the secreted. A minor component of the functional amyloid in this bacterium. Upon overexpression of the endogenous six-gene locus (fapA-fapF), cells form large clumps during liquid growth, make large amounts of biofilm and produce amyloid fibrils. This is Functional amyloid sbunit FapE from Pseudomonas aeruginosa (strain ATCC 15692 / DSM 22644 / CIP 104116 / JCM 14847 / LMG 12228 / 1C / PRS 101 / PAO1).